We begin with the raw amino-acid sequence, 374 residues long: Probable carboxylesterase 4, mitochondrial (374 aa).

Residues Met-1–Cys-52 constitute a mitochondrion transit peptide. An Involved in the stabilization of the negatively charged intermediate by the formation of the oxyanion hole motif is present at residues His-135 to Gly-137. Catalysis depends on residues Ser-219, Asp-317, and His-349.

It belongs to the 'GDXG' lipolytic enzyme family. Expressed in leaves, stems, flowers and siliques.

The protein resides in the mitochondrion. It carries out the reaction a carboxylic ester + H2O = an alcohol + a carboxylate + H(+). In terms of biological role, carboxylesterase acting on esters with varying acyl chain length. The chain is Probable carboxylesterase 4, mitochondrial (CXE4) from Arabidopsis thaliana (Mouse-ear cress).